The following is a 111-amino-acid chain: Probable 4-amino-4-deoxy-L-arabinose-phosphoundecaprenol flippase subunit ArnE (111 aa).

Topologically, residues 1-35 are cytoplasmic; the sequence is MIWLTLVFASLLSVAGQLCQKQATCFAAVNKRRKH. The chain crosses the membrane as a helical span at residues 36–56; that stretch reads IVLWLGLALACLGLAMVLWLL. In terms of domain architecture, EamA spans 40–109; the sequence is LGLALACLGL…IIGGIVILGS (70 aa). Topologically, residues 57 to 60 are periplasmic; sequence VLQN. Residues 61-81 form a helical membrane-spanning segment; it reads VPVGIAYPMLSLNFVWVTLAA. The Cytoplasmic segment spans residues 82–87; the sequence is VKLWHE. The chain crosses the membrane as a helical span at residues 88–108; it reads PVSLRHWCGLAFIIGGIVILG. The Periplasmic portion of the chain corresponds to 109–111; sequence STV.

This sequence belongs to the ArnE family. As to quaternary structure, heterodimer of ArnE and ArnF.

The protein localises to the cell inner membrane. It participates in bacterial outer membrane biogenesis; lipopolysaccharide biosynthesis. Functionally, translocates 4-amino-4-deoxy-L-arabinose-phosphoundecaprenol (alpha-L-Ara4N-phosphoundecaprenol) from the cytoplasmic to the periplasmic side of the inner membrane. The chain is Probable 4-amino-4-deoxy-L-arabinose-phosphoundecaprenol flippase subunit ArnE from Escherichia coli O81 (strain ED1a).